We begin with the raw amino-acid sequence, 179 residues long: MNDPEQYEPSSSTESVLMPPPALPQYFQRPAAAPQVYSTLEPSVQNLRSSLHKPLTGNQQQFVQKTLENVQKNPSQDDTHEFINQLADYPPTIPDSVTLHFLKSAGVDGSDPRVTRMISLAAQKHVSDIILDAMTSARMKGLGQTKKGTKDTKYTLTEELLDEILKEYGHQNTRPPYHT.

The segment at 1–23 (MNDPEQYEPSSSTESVLMPPPAL) is disordered.

The protein belongs to the TAF10 family. Component of the TFIID basal transcription factor complex, composed of TATA-box-binding protein tbp-1, and a number of TBP-associated factors (TAFs).

It is found in the nucleus. In terms of biological role, the TFIID basal transcription factor complex plays a major role in the initiation of RNA polymerase II (Pol II)-dependent transcription. TFIID recognizes and binds promoters via its subunit tbp-1, a TATA-box-binding protein, and promotes assembly of the pre-initiation complex (PIC). The TFIID complex consists of tbp-1 and TBP-associated factors (TAFs), including taf-10. Essential for early embryonic development, but not required for transcription of some genes; probably acts via activating transcription initiation by RNA Pol II, as part of the TFIID complex. In Caenorhabditis elegans, this protein is Transcription initiation factor TFIID subunit 10.